Here is a 107-residue protein sequence, read N- to C-terminus: Basic phospholipase A2 sphenotoxin subunit B (107 aa).

3 residues coordinate Ca(2+): Tyr-27, Gly-29, and Gly-31. 5 cysteine pairs are disulfide-bonded: Cys-28-Cys-44, Cys-43-Cys-91, Cys-50-Cys-88, Cys-57-Cys-81, and Cys-75-Cys-86. The active site involves His-47. Asp-48 serves as a coordination point for Ca(2+). Asp-89 is an active-site residue.

This sequence belongs to the phospholipase A2 family. Group II subfamily. D49 sub-subfamily. As to quaternary structure, heterodimer of A and B chains; non-covalently linked. The acidic protein (B chain) has phospholipase A2 activity and the A chain weakly inhibits the B chain enzymatic activity but potentiates its lethal potency. In terms of tissue distribution, expressed by the venom gland.

It is found in the secreted. The catalysed reaction is a 1,2-diacyl-sn-glycero-3-phosphocholine + H2O = a 1-acyl-sn-glycero-3-phosphocholine + a fatty acid + H(+). Its function is as follows. Heterodimer A-B: Sphenotoxin is a potent neurotoxin that possesses phospholipase A2 (PLA2) activity. It consists of a non-covalent association of a basic PLA2 subunit B with a non-enzymatic subunit A. Monomer B: Not found in vivo. In vitro, potent neurotoxin that possesses phospholipase A2 (PLA2) activity and exerts a lethal action by blocking neuromuscular transmission. Induces paralysis of the hind legs and neuromuscular blockade in mouse phrenic nerve-diaphragm preparations. PLA2 catalyzes the calcium-dependent hydrolysis of the 2-acyl groups in 3-sn-phosphoglycerides. The sequence is that of Basic phospholipase A2 sphenotoxin subunit B from Ophryacus sphenophrys (Broad-horned pitviper).